Reading from the N-terminus, the 516-residue chain is Nucleolar complex protein 4 homolog (516 aa).

3 consecutive transmembrane segments (helical) span residues 296–316, 347–367, and 375–395; these read SACD…FILI, FFHL…LVAA, and LALT…CNLL.

The protein belongs to the CBF/MAK21 family.

It is found in the nucleus membrane. It localises to the nucleus. The protein resides in the nucleolus. In Mus musculus (Mouse), this protein is Nucleolar complex protein 4 homolog (Noc4l).